The following is a 199-amino-acid chain: Ribonuclease P protein subunit p25 (199 aa).

Residues 1 to 11 (MENFRKVRSEE) are compositionally biased toward basic and acidic residues. Disordered regions lie at residues 1–31 (MENF…FADL) and 146–199 (PRQL…DRTA). The residue at position 172 (Ser172) is a Phosphoserine. Over residues 190–199 (PEAENEDRTA) the composition is skewed to acidic residues.

It belongs to the histone-like Alba family. As to quaternary structure, component of nuclear RNase P and RNase MRP ribonucleoproteins. RNase P consists of a catalytic RNA moiety and 10 different protein chains; POP1, POP4, POP5, POP7, RPP14, RPP21, RPP25, RPP30, RPP38 and RPP40. Within the RNase P complex, POP1, POP7 and RPP25 form the 'finger' subcomplex, POP5, RPP14, RPP40 and homodimeric RPP30 form the 'palm' subcomplex, and RPP21, POP4 and RPP38 form the 'wrist' subcomplex. All subunits of the RNase P complex interact with the catalytic RNA. Several subunits of RNase P are also part of the RNase MRP complex. RNase MRP consists of a catalytic RNA moiety and about 8 protein subunits; POP1, POP7, RPP25, RPP30, RPP38, RPP40 and possibly also POP4 and POP5. POP7 forms a heterodimer with RPP25 that binds to the P3 stem loop of the catalytic RNA.

Its subcellular location is the nucleus. It is found in the nucleolus. In terms of biological role, component of ribonuclease P, a ribonucleoprotein complex that generates mature tRNA molecules by cleaving their 5'-ends. Also a component of the MRP ribonuclease complex, which cleaves pre-rRNA sequences. This Rattus norvegicus (Rat) protein is Ribonuclease P protein subunit p25 (Rpp25).